A 257-amino-acid polypeptide reads, in one-letter code: Triosephosphate isomerase (257 aa).

Substrate is bound by residues Asn-11 and Lys-13. His-96 acts as the Electrophile in catalysis. Glu-170 functions as the Proton acceptor in the catalytic mechanism.

It belongs to the triosephosphate isomerase family. As to quaternary structure, homodimer.

It catalyses the reaction D-glyceraldehyde 3-phosphate = dihydroxyacetone phosphate. The protein operates within carbohydrate biosynthesis; gluconeogenesis. It functions in the pathway carbohydrate degradation; glycolysis; D-glyceraldehyde 3-phosphate from glycerone phosphate: step 1/1. The chain is Triosephosphate isomerase from Giardia intestinalis (Giardia lamblia).